Consider the following 209-residue polypeptide: Protein bli-3 (209 aa).

Polar residues predominate over residues Met-1–Thr-11. The tract at residues Met-1 to Leu-24 is disordered.

In Neurospora crassa (strain ATCC 24698 / 74-OR23-1A / CBS 708.71 / DSM 1257 / FGSC 987), this protein is Protein bli-3 (bli-3).